A 406-amino-acid polypeptide reads, in one-letter code: Ubiquitin-associated domain-containing protein 1 (406 aa).

The Ubiquitin-like domain maps to 14 to 98 (LRLHICSLDG…LLLVKKRAPP (85 aa)). Positions 95-122 (RAPPPTPKMAEVSADEKRKQDQKAPDKD) are disordered. The span at 108–122 (ADEKRKQDQKAPDKD) shows a compositional bias: basic and acidic residues. A UBA 1 domain is found at 186–231 (EDDEDRVDEVALRQLTEMGFPESRAVKALRLNHMSVTQAMEWLIEH). Residues 238-257 (DAPLPCENSSEAAGGLATGE) show a composition bias toward low complexity. The segment at 238–272 (DAPLPCENSSEAAGGLATGEAETKPTLGAGAEDPK) is disordered. The 41-residue stretch at 289-329 (RPDPRAVIALMEMGFDEKEVIDALRVNNNQQDAACEWLLGD) folds into the UBA 2 domain. In terms of domain architecture, STI1 spans 354 to 393 (NPVVQLGLTNPKTLLAFEDMLENPLNSTQWMNDPETGPVM).

Component of the KPC complex.

It is found in the cytoplasm. Its pathway is protein modification; protein ubiquitination. Non-catalytic component of the KPC complex, a E3 ubiquitin-protein ligase complex that mediates polyubiquitination of target proteins, such as CDKN1B and NFKB1. Within the KPC complex, UBAC1 acts as an adapter that promotes the transfer of target proteins that have been polyubiquitinated by RNF123/KPC1 to the 26S proteasome. The sequence is that of Ubiquitin-associated domain-containing protein 1 (ubac1) from Xenopus tropicalis (Western clawed frog).